The following is an 85-amino-acid chain: UPF0386 protein Arad_1912 (85 aa).

It belongs to the UPF0386 family.

The sequence is that of UPF0386 protein Arad_1912 from Rhizobium rhizogenes (strain K84 / ATCC BAA-868) (Agrobacterium radiobacter).